The following is a 360-amino-acid chain: Protein RecA (360 aa).

64–71 (GHESSGKT) contributes to the ATP binding site. The segment at 333–360 (QEQVQPEPKSKQSKSKQASEQATQDELI) is disordered.

This sequence belongs to the RecA family.

It localises to the cytoplasm. Functionally, can catalyze the hydrolysis of ATP in the presence of single-stranded DNA, the ATP-dependent uptake of single-stranded DNA by duplex DNA, and the ATP-dependent hybridization of homologous single-stranded DNAs. It interacts with LexA causing its activation and leading to its autocatalytic cleavage. In Francisella philomiragia subsp. philomiragia (strain ATCC 25017 / CCUG 19701 / FSC 153 / O#319-036), this protein is Protein RecA.